A 327-amino-acid chain; its full sequence is Polyadenylate-binding protein-interacting protein 9 (327 aa).

The PAM2-like signature appears at 59-69 (KLNPLAKEFFP). Residues 97 to 113 (KQSGEEFDLDAKKDDNT) are compositionally biased toward basic and acidic residues. The disordered stretch occupies residues 97–132 (KQSGEEFDLDAKKDDNTRKRRNYSQGRRRLTGRISK). The Bipartite nuclear localization signal motif lies at 114–125 (RKRRNYSQGRRR). Over residues 114-127 (RKRRNYSQGRRRLT) the composition is skewed to basic residues. RRM domains are found at residues 141–216 (RTVY…PSKT) and 238–314 (RTIY…PSKT). The tract at residues 308–327 (RVSPSKTPVRPRITRPPSTN) is disordered.

The protein localises to the nucleus. The sequence is that of Polyadenylate-binding protein-interacting protein 9 (CID9) from Arabidopsis thaliana (Mouse-ear cress).